A 442-amino-acid polypeptide reads, in one-letter code: UDP-N-acetylmuramoylalanine--D-glutamate ligase (442 aa).

113-119 (GSNGKTT) is an ATP binding site.

This sequence belongs to the MurCDEF family.

The protein resides in the cytoplasm. The catalysed reaction is UDP-N-acetyl-alpha-D-muramoyl-L-alanine + D-glutamate + ATP = UDP-N-acetyl-alpha-D-muramoyl-L-alanyl-D-glutamate + ADP + phosphate + H(+). Its pathway is cell wall biogenesis; peptidoglycan biosynthesis. In terms of biological role, cell wall formation. Catalyzes the addition of glutamate to the nucleotide precursor UDP-N-acetylmuramoyl-L-alanine (UMA). The polypeptide is UDP-N-acetylmuramoylalanine--D-glutamate ligase (Coxiella burnetii (strain CbuK_Q154) (Coxiella burnetii (strain Q154))).